Reading from the N-terminus, the 278-residue chain is Elongation factor Ts (278 aa).

Residues 80 to 83 (TDFV) form an involved in Mg(2+) ion dislocation from EF-Tu region.

This sequence belongs to the EF-Ts family.

Its subcellular location is the cytoplasm. Functionally, associates with the EF-Tu.GDP complex and induces the exchange of GDP to GTP. It remains bound to the aminoacyl-tRNA.EF-Tu.GTP complex up to the GTP hydrolysis stage on the ribosome. In Paenarthrobacter aurescens (strain TC1), this protein is Elongation factor Ts.